Consider the following 225-residue polypeptide: Imidazole glycerol phosphate synthase subunit HisH (225 aa).

Positions 3 to 225 (TIAIVDYGMG…LYRNFVDWQP (223 aa)) constitute a Glutamine amidotransferase type-1 domain. The Nucleophile role is filled by cysteine 82. Active-site residues include histidine 205 and glutamate 207.

As to quaternary structure, heterodimer of HisH and HisF.

Its subcellular location is the cytoplasm. The enzyme catalyses 5-[(5-phospho-1-deoxy-D-ribulos-1-ylimino)methylamino]-1-(5-phospho-beta-D-ribosyl)imidazole-4-carboxamide + L-glutamine = D-erythro-1-(imidazol-4-yl)glycerol 3-phosphate + 5-amino-1-(5-phospho-beta-D-ribosyl)imidazole-4-carboxamide + L-glutamate + H(+). It catalyses the reaction L-glutamine + H2O = L-glutamate + NH4(+). It functions in the pathway amino-acid biosynthesis; L-histidine biosynthesis; L-histidine from 5-phospho-alpha-D-ribose 1-diphosphate: step 5/9. In terms of biological role, IGPS catalyzes the conversion of PRFAR and glutamine to IGP, AICAR and glutamate. The HisH subunit catalyzes the hydrolysis of glutamine to glutamate and ammonia as part of the synthesis of IGP and AICAR. The resulting ammonia molecule is channeled to the active site of HisF. The chain is Imidazole glycerol phosphate synthase subunit HisH from Bordetella bronchiseptica (strain ATCC BAA-588 / NCTC 13252 / RB50) (Alcaligenes bronchisepticus).